Consider the following 137-residue polypeptide: Glutamyl-tRNA(Gln) amidotransferase subunit C, chloroplastic/mitochondrial (137 aa).

The protein belongs to the GatC family. Subunit of the heterotrimeric GatCAB amidotransferase (AdT) complex, composed of A, B and C subunits.

The protein localises to the mitochondrion. The protein resides in the plastid. It localises to the chloroplast. It carries out the reaction L-glutamyl-tRNA(Gln) + L-glutamine + ATP + H2O = L-glutaminyl-tRNA(Gln) + L-glutamate + ADP + phosphate + H(+). Its function is as follows. Allows the formation of correctly charged Gln-tRNA(Gln) through the transamidation of misacylated Glu-tRNA(Gln) in chloroplasts and mitochondria. The reaction takes place in the presence of glutamine and ATP through an activated gamma-phospho-Glu-tRNA(Gln). The polypeptide is Glutamyl-tRNA(Gln) amidotransferase subunit C, chloroplastic/mitochondrial (Vitis vinifera (Grape)).